Reading from the N-terminus, the 63-residue chain is Sec-independent protein translocase protein TatA (63 aa).

Residues 1–21 (MGSFSMWHWLIVLVIVLLLFG) form a helical membrane-spanning segment. Positions 42 to 63 (GMTDEDAPDTAKTVDHKADETK) are disordered. Residues 53 to 63 (KTVDHKADETK) are compositionally biased toward basic and acidic residues.

Belongs to the TatA/E family. The Tat system comprises two distinct complexes: a TatABC complex, containing multiple copies of TatA, TatB and TatC subunits, and a separate TatA complex, containing only TatA subunits. Substrates initially bind to the TatABC complex, which probably triggers association of the separate TatA complex to form the active translocon.

The protein resides in the cell inner membrane. In terms of biological role, part of the twin-arginine translocation (Tat) system that transports large folded proteins containing a characteristic twin-arginine motif in their signal peptide across membranes. TatA could form the protein-conducting channel of the Tat system. This Rhizobium leguminosarum bv. trifolii (strain WSM2304) protein is Sec-independent protein translocase protein TatA.